The chain runs to 164 residues: Probable ribosome biogenesis protein RLP24 (164 aa).

This sequence belongs to the eukaryotic ribosomal protein eL24 family. As to quaternary structure, associated with nucleolar and cytoplasmic pre-60S particles. At the end of biogenesis it dissociates from cytoplasmic pre-60S particles and is likely to be exchanged for its ribosomal homolog, RPL24.

It localises to the cytoplasm. The protein localises to the nucleus. Involved in the biogenesis of the 60S ribosomal subunit. Ensures the docking of nog1 to pre-60S particles. Activates and recruits ATPase AFG2 to cytoplasmic pre-60S ribosomal particles. The polypeptide is Probable ribosome biogenesis protein RLP24 (rlp24) (Dictyostelium discoideum (Social amoeba)).